We begin with the raw amino-acid sequence, 349 residues long: Cobalt-precorrin-5B C(1)-methyltransferase (349 aa).

It belongs to the CbiD family.

The enzyme catalyses Co-precorrin-5B + S-adenosyl-L-methionine = Co-precorrin-6A + S-adenosyl-L-homocysteine. It functions in the pathway cofactor biosynthesis; adenosylcobalamin biosynthesis; cob(II)yrinate a,c-diamide from sirohydrochlorin (anaerobic route): step 6/10. In terms of biological role, catalyzes the methylation of C-1 in cobalt-precorrin-5B to form cobalt-precorrin-6A. The sequence is that of Cobalt-precorrin-5B C(1)-methyltransferase from Saccharolobus islandicus (strain Y.N.15.51 / Yellowstone #2) (Sulfolobus islandicus).